The sequence spans 205 residues: N-(5'-phosphoribosyl)anthranilate isomerase (205 aa).

The protein belongs to the TrpF family.

It carries out the reaction N-(5-phospho-beta-D-ribosyl)anthranilate = 1-(2-carboxyphenylamino)-1-deoxy-D-ribulose 5-phosphate. It functions in the pathway amino-acid biosynthesis; L-tryptophan biosynthesis; L-tryptophan from chorismate: step 3/5. The sequence is that of N-(5'-phosphoribosyl)anthranilate isomerase from Marinomonas sp. (strain MWYL1).